The primary structure comprises 250 residues: Ubiquinone/menaquinone biosynthesis C-methyltransferase UbiE (250 aa).

Residues Ser73, Asp94, and Asn122–Ala123 contribute to the S-adenosyl-L-methionine site.

This sequence belongs to the class I-like SAM-binding methyltransferase superfamily. MenG/UbiE family.

The catalysed reaction is a 2-demethylmenaquinol + S-adenosyl-L-methionine = a menaquinol + S-adenosyl-L-homocysteine + H(+). The enzyme catalyses a 2-methoxy-6-(all-trans-polyprenyl)benzene-1,4-diol + S-adenosyl-L-methionine = a 5-methoxy-2-methyl-3-(all-trans-polyprenyl)benzene-1,4-diol + S-adenosyl-L-homocysteine + H(+). It functions in the pathway quinol/quinone metabolism; menaquinone biosynthesis; menaquinol from 1,4-dihydroxy-2-naphthoate: step 2/2. The protein operates within cofactor biosynthesis; ubiquinone biosynthesis. Functionally, methyltransferase required for the conversion of demethylmenaquinol (DMKH2) to menaquinol (MKH2) and the conversion of 2-polyprenyl-6-methoxy-1,4-benzoquinol (DDMQH2) to 2-polyprenyl-3-methyl-6-methoxy-1,4-benzoquinol (DMQH2). The sequence is that of Ubiquinone/menaquinone biosynthesis C-methyltransferase UbiE from Legionella pneumophila (strain Corby).